Reading from the N-terminus, the 285-residue chain is Bifunctional protein FolD (285 aa).

NADP(+) contacts are provided by residues 166–168 (GAS) and isoleucine 232.

It belongs to the tetrahydrofolate dehydrogenase/cyclohydrolase family. Homodimer.

The catalysed reaction is (6R)-5,10-methylene-5,6,7,8-tetrahydrofolate + NADP(+) = (6R)-5,10-methenyltetrahydrofolate + NADPH. It catalyses the reaction (6R)-5,10-methenyltetrahydrofolate + H2O = (6R)-10-formyltetrahydrofolate + H(+). It participates in one-carbon metabolism; tetrahydrofolate interconversion. Its function is as follows. Catalyzes the oxidation of 5,10-methylenetetrahydrofolate to 5,10-methenyltetrahydrofolate and then the hydrolysis of 5,10-methenyltetrahydrofolate to 10-formyltetrahydrofolate. The sequence is that of Bifunctional protein FolD from Aliivibrio fischeri (strain MJ11) (Vibrio fischeri).